Here is a 140-residue protein sequence, read N- to C-terminus: ATP synthase epsilon chain (140 aa).

Belongs to the ATPase epsilon chain family. In terms of assembly, F-type ATPases have 2 components, CF(1) - the catalytic core - and CF(0) - the membrane proton channel. CF(1) has five subunits: alpha(3), beta(3), gamma(1), delta(1), epsilon(1). CF(0) has three main subunits: a, b and c.

The protein resides in the cell inner membrane. In terms of biological role, produces ATP from ADP in the presence of a proton gradient across the membrane. This Pseudoalteromonas translucida (strain TAC 125) protein is ATP synthase epsilon chain.